We begin with the raw amino-acid sequence, 479 residues long: Ribosomal RNA small subunit methyltransferase F (479 aa).

S-adenosyl-L-methionine contacts are provided by residues 125–131 (AAAPGSK), glutamate 149, aspartate 176, and aspartate 194. Cysteine 247 serves as the catalytic Nucleophile.

Belongs to the class I-like SAM-binding methyltransferase superfamily. RsmB/NOP family.

It is found in the cytoplasm. The catalysed reaction is cytidine(1407) in 16S rRNA + S-adenosyl-L-methionine = 5-methylcytidine(1407) in 16S rRNA + S-adenosyl-L-homocysteine + H(+). Specifically methylates the cytosine at position 1407 (m5C1407) of 16S rRNA. This Salmonella paratyphi B (strain ATCC BAA-1250 / SPB7) protein is Ribosomal RNA small subunit methyltransferase F.